A 327-amino-acid chain; its full sequence is Probable NAD(P)H-dependent D-xylose reductase xyl1 (327 aa).

Tyrosine 57 (proton donor) is an active-site residue. Histidine 119 contributes to the substrate binding site. NAD(+) contacts are provided by residues 173–174, 222–231, and 278–288; these read SN, SSLGPQSFIE, and KSNNPDRLAQN.

It belongs to the aldo/keto reductase family.

It catalyses the reaction xylitol + NAD(+) = D-xylose + NADH + H(+). It carries out the reaction xylitol + NADP(+) = D-xylose + NADPH + H(+). It functions in the pathway carbohydrate metabolism; D-xylose degradation. In terms of biological role, catalyzes the initial reaction in the xylose utilization pathway by reducing D-xylose into xylitol. Xylose is a major component of hemicelluloses such as xylan. Most fungi utilize D-xylose via three enzymatic reactions, xylose reductase (XR), xylitol dehydrogenase (XDH), and xylulokinase, to form xylulose 5-phosphate, which enters pentose phosphate pathway. The chain is Probable NAD(P)H-dependent D-xylose reductase xyl1 (xyl1) from Arthroderma otae (strain ATCC MYA-4605 / CBS 113480) (Microsporum canis).